The chain runs to 117 residues: Large ribosomal subunit protein bL20 (117 aa).

This sequence belongs to the bacterial ribosomal protein bL20 family.

Binds directly to 23S ribosomal RNA and is necessary for the in vitro assembly process of the 50S ribosomal subunit. It is not involved in the protein synthesizing functions of that subunit. In Rickettsia felis (strain ATCC VR-1525 / URRWXCal2) (Rickettsia azadi), this protein is Large ribosomal subunit protein bL20.